The sequence spans 332 residues: Tetraacyldisaccharide 4'-kinase (332 aa).

60–67 (TVGGTGKT) provides a ligand contact to ATP.

It belongs to the LpxK family.

The catalysed reaction is a lipid A disaccharide + ATP = a lipid IVA + ADP + H(+). It participates in glycolipid biosynthesis; lipid IV(A) biosynthesis; lipid IV(A) from (3R)-3-hydroxytetradecanoyl-[acyl-carrier-protein] and UDP-N-acetyl-alpha-D-glucosamine: step 6/6. Transfers the gamma-phosphate of ATP to the 4'-position of a tetraacyldisaccharide 1-phosphate intermediate (termed DS-1-P) to form tetraacyldisaccharide 1,4'-bis-phosphate (lipid IVA). In Pseudomonas paraeruginosa (strain DSM 24068 / PA7) (Pseudomonas aeruginosa (strain PA7)), this protein is Tetraacyldisaccharide 4'-kinase.